The following is a 377-amino-acid chain: UPF0754 membrane protein lwe2241 (377 aa).

2 helical membrane passes run 1 to 21 (MSVL…GAMT) and 357 to 377 (YLGG…AIWI).

It belongs to the UPF0754 family.

The protein resides in the cell membrane. The sequence is that of UPF0754 membrane protein lwe2241 from Listeria welshimeri serovar 6b (strain ATCC 35897 / DSM 20650 / CCUG 15529 / CIP 8149 / NCTC 11857 / SLCC 5334 / V8).